Consider the following 436-residue polypeptide: Trigger factor (436 aa).

The PPIase FKBP-type domain maps to 163–248 (GDRVVLDFAG…VKEVAEGVLP (86 aa)).

This sequence belongs to the FKBP-type PPIase family. Tig subfamily.

The protein resides in the cytoplasm. It catalyses the reaction [protein]-peptidylproline (omega=180) = [protein]-peptidylproline (omega=0). In terms of biological role, involved in protein export. Acts as a chaperone by maintaining the newly synthesized protein in an open conformation. Functions as a peptidyl-prolyl cis-trans isomerase. The chain is Trigger factor from Bordetella parapertussis (strain 12822 / ATCC BAA-587 / NCTC 13253).